The primary structure comprises 843 residues: MYEGKHIHYSEVDHKPLCSYSPKLCKQRRLNGYAFCIRHVLEDRTAPFRQCEYVAKYNSQRCTNPIPKAHDRKYCNSHLQVMGVLPKKERKKKQDTIESLALNITVPSLALKTHNGLEILPPSPPPALVCLLPSDPFSFYKEEKMLKSSGAFLKKPQETLNHKQKQQDHSVDTNHLRTSSLPSTLSHSCLPPLLTGRATQTPINPSSPRAATPTVRSGSLFKTSSSLQDTHQGSKDSTDNKIKLDLNHAFDKKVVPAASGMAPCCDDTQSQLIKKCTVAMQQQAPCLKKLHRLMDQHKGRFQDLNSHLGLDWSEDSEEEDGDWKLVSYQCQRLQEKRSEESRSWAERLAGFCSYLRQKHMHLCREQRGFRRERRSQHALRKALVQAAREEPHQTAQLIQEQHQVTSAPSSTAVSLAGDDSGLCQAVVKGENCRNSALPFTRHCFQHILQNRSQQLFSSCTARFADGAQCSIPVFDITHQTPLCDEHAKKMDNFLRGDISRRTYHHHQQIQRHRPLKKAKPPALSKKHKKKGKRGTQRRPQKPIPPALPQGNLALPSILCLPSQPSGIRSPLTPDLSADEFPDDITNDISDIPHDLELNQEDFSDVLPRLPDDLQDFDLFEGKNSELLPTSEEAEELVRVLQAMGSYPESLACLSGMAELGPVEGVDCRSMPGGVVDLLSARLSAETLSSLELDPSLLHPSEDAFPPSPPSPQPPLTPPSSVGHLTDSTYTQRQPHLLAKMEDSKADLANLPLGKDEDVSHGSWGVLALPLSDSSQFHSLIASDGLLMPTGLSTPCQPSSALSALPQSSQTRSTTTSPTSQTKHLPPPPTVQALWDPSRLTAAP.

Residues 159–175 (TLNHKQKQQDHSVDTNH) show a composition bias toward basic and acidic residues. Disordered regions lie at residues 159–216 (TLNH…PTVR), 221–240 (FKTS…STDN), 503–550 (YHHH…LPQG), 695–726 (SLLH…HLTD), and 791–843 (LSTP…TAAP). 3 stretches are compositionally biased toward polar residues: residues 176–187 (LRTSSLPSTLSH), 197–216 (RATQ…PTVR), and 221–231 (FKTSSSLQDTH). Over residues 503-540 (YHHHQQIQRHRPLKKAKPPALSKKHKKKGKRGTQRRPQ) the composition is skewed to basic residues. Residues 705-717 (PPSPPSPQPPLTP) are compositionally biased toward pro residues. Over residues 796–821 (QPSSALSALPQSSQTRSTTTSPTSQT) the composition is skewed to low complexity.

This sequence belongs to the INO80D family. As to quaternary structure, component of the chromatin-remodeling INO80 complex.

The protein localises to the nucleus. Its function is as follows. Putative regulatory component of the chromatin remodeling INO80 complex which is involved in transcriptional regulation, DNA replication and probably DNA repair. The chain is INO80 complex subunit D-B (ino80db) from Danio rerio (Zebrafish).